We begin with the raw amino-acid sequence, 205 residues long: Ribonuclease HII (205 aa).

Positions 14-201 (EIVAGVDEAG…KGNINHSAIL (188 aa)) constitute an RNase H type-2 domain. 3 residues coordinate a divalent metal cation: Asp-20, Glu-21, and Asp-111.

It belongs to the RNase HII family. The cofactor is Mn(2+). Mg(2+) is required as a cofactor.

The protein localises to the cytoplasm. It carries out the reaction Endonucleolytic cleavage to 5'-phosphomonoester.. Endonuclease that specifically degrades the RNA of RNA-DNA hybrids. This chain is Ribonuclease HII, found in Orientia tsutsugamushi (strain Boryong) (Rickettsia tsutsugamushi).